The primary structure comprises 122 residues: Atrial gland peptide B (122 aa).

Positions 1–21 (MKANTMFIILCLTLSTLCVSS) are cleaved as a signal peptide. The propeptide occupies 22–34 (QFTSVLGKIFVTN). Position 69 is an isoleucine amide (I69). The propeptide occupies 73–122 (AAGGMEQSEGQNPETKSHSWRERSVLTPSLLSLGESLESGISKRISINQD). Residues 74 to 95 (AGGMEQSEGQNPETKSHSWRER) are disordered.

Belongs to the molluscan ELH family.

The protein resides in the secreted. Functionally, the atrial gland peptide A and peptide B precursors are the source of the 2 peptides that, upon release from this reproductive system gland, initiate the egg-laying process by exciting the bag cell neurons. These neurons, clustered in neural connectives near the abdominal ganglion, in turn release other peptides that act directly on the ganglion and also, via the circulating hemolymph, on many other organs to control the physiological processes of egg-laying. One of these other peptides is the egg-laying hormone. This chain is Atrial gland peptide B, found in Aplysia californica (California sea hare).